A 155-amino-acid polypeptide reads, in one-letter code: Small ribosomal subunit protein uS7cz/uS7cy (155 aa).

It belongs to the universal ribosomal protein uS7 family. In terms of assembly, part of the 30S ribosomal subunit.

The protein resides in the plastid. Its subcellular location is the chloroplast. One of the primary rRNA binding proteins, it binds directly to 16S rRNA where it nucleates assembly of the head domain of the 30S subunit. The chain is Small ribosomal subunit protein uS7cz/uS7cy (rps7-A) from Morus indica (Mulberry).